Consider the following 325-residue polypeptide: G-protein coupled receptor E6 (325 aa).

7 consecutive transmembrane segments (helical) span residues 45 to 65 (LFGT…MGFF), 71 to 91 (FTPS…LWLM), 106 to 126 (IVTE…NVGM), 145 to 165 (PAAI…VIAV), 198 to 218 (LVAK…GTAL), 233 to 253 (AICV…LTAM), and 274 to 294 (VFIY…MFTG).

It belongs to the G-protein coupled receptor 1 family.

The protein resides in the host membrane. The protein is G-protein coupled receptor E6 (E6) of Equus caballus (Horse).